Here is a 785-residue protein sequence, read N- to C-terminus: E3 UFM1-protein ligase 1 homolog (785 aa).

A disordered region spans residues Gly-404 to Val-483.

The protein belongs to the UFL1 family.

In terms of biological role, E3 UFM1-protein ligase that mediates ufmylation of target proteins. This chain is E3 UFM1-protein ligase 1 homolog, found in Drosophila willistoni (Fruit fly).